The chain runs to 349 residues: S-adenosylmethionine:tRNA ribosyltransferase-isomerase (349 aa).

Belongs to the QueA family. As to quaternary structure, monomer.

The protein resides in the cytoplasm. It catalyses the reaction 7-aminomethyl-7-carbaguanosine(34) in tRNA + S-adenosyl-L-methionine = epoxyqueuosine(34) in tRNA + adenine + L-methionine + 2 H(+). It functions in the pathway tRNA modification; tRNA-queuosine biosynthesis. Its function is as follows. Transfers and isomerizes the ribose moiety from AdoMet to the 7-aminomethyl group of 7-deazaguanine (preQ1-tRNA) to give epoxyqueuosine (oQ-tRNA). This Pseudomonas fluorescens (strain SBW25) protein is S-adenosylmethionine:tRNA ribosyltransferase-isomerase.